Here is a 695-residue protein sequence, read N- to C-terminus: RING finger protein 145 (695 aa).

13 consecutive transmembrane segments (helical) span residues tyrosine 53–proline 73, leucine 77–serine 97, phenylalanine 123–threonine 143, isoleucine 146–glutamate 166, isoleucine 168–alanine 188, leucine 225–threonine 245, tyrosine 275–cysteine 295, threonine 316–valine 336, phenylalanine 340–isoleucine 360, serine 384–phenylalanine 404, leucine 410–valine 430, leucine 460–glycine 480, and tryptophan 482–alanine 502. An RING-type; atypical zinc finger spans residues cysteine 537–histidine 575. Residues serine 589–proline 604 are compositionally biased toward polar residues. Residues serine 589–proline 608 form a disordered region.

It is found in the membrane. The polypeptide is RING finger protein 145 (rnf145) (Xenopus laevis (African clawed frog)).